The sequence spans 106 residues: Integration host factor subunit alpha (106 aa).

Belongs to the bacterial histone-like protein family. As to quaternary structure, heterodimer of an alpha and a beta chain.

Its function is as follows. This protein is one of the two subunits of integration host factor, a specific DNA-binding protein that functions in genetic recombination as well as in transcriptional and translational control. In Methylobacterium radiotolerans (strain ATCC 27329 / DSM 1819 / JCM 2831 / NBRC 15690 / NCIMB 10815 / 0-1), this protein is Integration host factor subunit alpha.